The chain runs to 396 residues: THAP domain-containing protein 5 (396 aa).

The THAP-type zinc finger occupies 2–85; that stretch reads MPRYCAAICC…LKQTAVPTIF (84 aa). The disordered stretch occupies residues 86–113; the sequence is SLPEDNQGKDPSKKKSQKKNLEDEKEVC. Residues 91-113 show a composition bias toward basic and acidic residues; the sequence is NQGKDPSKKKSQKKNLEDEKEVC. An HCFC1-binding motif (HBM) motif is present at residues 322 to 325; sequence EHSY. The stretch at 349–382 forms a coiled coil; sequence LELKEQQTLGRLKSLEALVRQLKQENWLSEENVK.

In terms of assembly, interacts with HTRA2; under apoptotic conditions. Interacts with ABRAXAS2. Cleaved by HTRA2 during apoptosis.

The protein resides in the nucleus. Its function is as follows. Has sequence-specific DNA-binding activity and can function as transcriptional repressor (in vitro). May be a regulator of cell cycle: THAP5 overexpression in human cell lines causes cell cycle arrest at G2/M phase. This Macaca fascicularis (Crab-eating macaque) protein is THAP domain-containing protein 5 (THAP5).